A 182-amino-acid chain; its full sequence is Translation initiation factor IF-3 (182 aa).

This sequence belongs to the IF-3 family. As to quaternary structure, monomer.

The protein localises to the cytoplasm. In terms of biological role, IF-3 binds to the 30S ribosomal subunit and shifts the equilibrium between 70S ribosomes and their 50S and 30S subunits in favor of the free subunits, thus enhancing the availability of 30S subunits on which protein synthesis initiation begins. This Endomicrobium trichonymphae protein is Translation initiation factor IF-3.